The chain runs to 81 residues: Cell division protein ZapB (81 aa).

The stretch at 5–81 (LEVFEKLESK…QALLGRMEEV (77 aa)) forms a coiled coil. A disordered region spans residues 43 to 64 (VHSAQNGREELERENQQLREQQ). The segment covering 49–59 (GREELERENQQ) has biased composition (basic and acidic residues).

This sequence belongs to the ZapB family. Homodimer. The ends of the coiled-coil dimer bind to each other, forming polymers. Interacts with FtsZ.

It is found in the cytoplasm. In terms of biological role, non-essential, abundant cell division factor that is required for proper Z-ring formation. It is recruited early to the divisome by direct interaction with FtsZ, stimulating Z-ring assembly and thereby promoting cell division earlier in the cell cycle. Its recruitment to the Z-ring requires functional FtsA or ZipA. The polypeptide is Cell division protein ZapB (Enterobacter sp. (strain 638)).